Here is a 69-residue protein sequence, read N- to C-terminus: A-kinase anchor protein inhibitor 1 (69 aa).

The interval 39–69 (QESLRREGRPGDSRAWGQLGGCELTKKHEKK) is disordered. The span at 41-50 (SLRREGRPGD) shows a compositional bias: basic and acidic residues.

In terms of assembly, binds cAMP-dependent protein kinase (PKA). Interacts specifically with RII-regulatory subunits of PKA (PRKAR2A and PRKAR2B). Preferentially expressed in the neural tissues.

Functionally, protein kinase A (PKA)-binding protein. Binds to type II regulatory subunits of protein kinase A (PKA) and may block the A-kinase anchoring protein (AKAP)-mediated subcellular localization of PKA. The protein is A-kinase anchor protein inhibitor 1 of Mus musculus (Mouse).